The chain runs to 202 residues: Small ribosomal subunit protein uS5 (202 aa).

The S5 DRBM domain maps to 42–105 (LKDEVLKIMP…ILAKLSIVPV (64 aa)). A Phosphothreonine modification is found at threonine 192.

This sequence belongs to the universal ribosomal protein uS5 family. As to quaternary structure, component of the small ribosomal subunit. Interacts with zinc finger protein ZNF277 (via zinc-finger domains); the interaction is direct; the interaction is extra-ribosomal. Interaction with ZNF277 competes with the binding of RPS2 to protein arginine methyltransferase PRMT3. In terms of processing, citrullinated by PADI4 in the Arg/Gly-rich region. Post-translationally, asymmetric arginine dimethylation by PRMT3 occurs at multiple sites in the Arg/Gly-rich region. Monoubiquitinated by RNF10 when a ribosome has stalled during translation, leading to its degradation by the proteasome. Deubiquitinated by USP10, preventing degradation by the proteasome and promoting 40S ribosome subunit recycling following ribosome dissociation.

It is found in the cytoplasm. Its subcellular location is the nucleus. It localises to the nucleolus. Component of the ribosome, a large ribonucleoprotein complex responsible for the synthesis of proteins in the cell. The small ribosomal subunit (SSU) binds messenger RNAs (mRNAs) and translates the encoded message by selecting cognate aminoacyl-transfer RNA (tRNA) molecules. The large subunit (LSU) contains the ribosomal catalytic site termed the peptidyl transferase center (PTC), which catalyzes the formation of peptide bonds, thereby polymerizing the amino acids delivered by tRNAs into a polypeptide chain. The nascent polypeptides leave the ribosome through a tunnel in the LSU and interact with protein factors that function in enzymatic processing, targeting, and the membrane insertion of nascent chains at the exit of the ribosomal tunnel. Plays a role in the assembly and function of the 40S ribosomal subunit. Mutations in this protein affects the control of translational fidelity. Involved in nucleolar processing of pre-18S ribosomal RNA and ribosome assembly. This is Small ribosomal subunit protein uS5 (RPS2) from Cricetulus griseus (Chinese hamster).